The sequence spans 355 residues: Peptide chain release factor 1 (355 aa).

The residue at position 233 (glutamine 233) is an N5-methylglutamine.

Belongs to the prokaryotic/mitochondrial release factor family. In terms of processing, methylated by PrmC. Methylation increases the termination efficiency of RF1.

It is found in the cytoplasm. In terms of biological role, peptide chain release factor 1 directs the termination of translation in response to the peptide chain termination codons UAG and UAA. In Bacillus mycoides (strain KBAB4) (Bacillus weihenstephanensis), this protein is Peptide chain release factor 1.